The following is a 160-amino-acid chain: Outer membrane protein MT2024.1 (160 aa).

Positions 1–22 are cleaved as a signal peptide; that stretch reads MSWSRVIAYGLLPGLALALTCG.

The protein localises to the cell outer membrane. The polypeptide is Outer membrane protein MT2024.1 (Mycobacterium tuberculosis (strain CDC 1551 / Oshkosh)).